The sequence spans 769 residues: Bifunctional glycosyltransferase pgtA (769 aa).

Residues Tyr-25–Thr-210 form an N-acetylgalactosamine 3-beta-galactosyltransferase region. Over residues Asn-410–Asn-441 the composition is skewed to low complexity. The tract at residues Asn-410 to Ser-442 is disordered. The tract at residues Ser-442–Ser-769 is alpha-1,2-fucosyltransferase.

It belongs to the glycosyltransferase 2 family.

It catalyses the reaction an N-acetyl-beta-D-glucosaminyl derivative + UDP-alpha-D-galactose = a beta-D-galactosyl-(1-&gt;3)-N-acetyl-beta-D-glucosaminyl derivative + UDP + H(+). The catalysed reaction is a beta-D-galactosyl-(1-&gt;3)-N-acetyl-beta-D-glucosaminyl derivative + GDP-beta-L-fucose = an alpha-L-Fuc-(1-&gt;2)-beta-D-Gal-(1-&gt;3)-beta-D-GlcNAc derivative + GDP + H(+). Its function is as follows. Bifunctional protein composed of 2 glycosyltransferase domains involved in glycosylating skp1. The N-terminal part catalyzes the transfer of a galactose residue to GlcNAc-skp1 in a beta 1-3 linkage. The C-terminal part catalyzes the transfer of a fucose residue to Gal-GlcNAc-skp1 in an alpha 1-2 linkage. The polypeptide is Bifunctional glycosyltransferase pgtA (pgtA) (Dictyostelium discoideum (Social amoeba)).